Here is a 301-residue protein sequence, read N- to C-terminus: GTP cyclohydrolase FolE2 (301 aa).

It belongs to the GTP cyclohydrolase IV family.

It carries out the reaction GTP + H2O = 7,8-dihydroneopterin 3'-triphosphate + formate + H(+). It participates in cofactor biosynthesis; 7,8-dihydroneopterin triphosphate biosynthesis; 7,8-dihydroneopterin triphosphate from GTP: step 1/1. Functionally, converts GTP to 7,8-dihydroneopterin triphosphate. The sequence is that of GTP cyclohydrolase FolE2 from Exiguobacterium sibiricum (strain DSM 17290 / CCUG 55495 / CIP 109462 / JCM 13490 / 255-15).